The primary structure comprises 437 residues: Cobyrinate a,c-diamide synthase (437 aa).

One can recognise a GATase cobBQ-type domain in the interval 241–430; the sequence is KIAVAKDEAF…AHVHFFGNLD (190 aa). C323 (nucleophile) is an active-site residue.

Belongs to the CobB/CbiA family. It depends on Mg(2+) as a cofactor.

It catalyses the reaction cob(II)yrinate + 2 L-glutamine + 2 ATP + 2 H2O = cob(II)yrinate a,c diamide + 2 L-glutamate + 2 ADP + 2 phosphate + 2 H(+). The protein operates within cofactor biosynthesis; adenosylcobalamin biosynthesis; cob(II)yrinate a,c-diamide from sirohydrochlorin (anaerobic route): step 10/10. Catalyzes the ATP-dependent amidation of the two carboxylate groups at positions a and c of cobyrinate, using either L-glutamine or ammonia as the nitrogen source. In Clostridium acetobutylicum (strain ATCC 824 / DSM 792 / JCM 1419 / IAM 19013 / LMG 5710 / NBRC 13948 / NRRL B-527 / VKM B-1787 / 2291 / W), this protein is Cobyrinate a,c-diamide synthase.